The primary structure comprises 373 residues: Chorismate synthase (373 aa).

NADP(+) contacts are provided by arginine 48 and arginine 54. FMN contacts are provided by residues 125–127, 248–249, glycine 288, 303–307, and arginine 329; these read RSS, NA, and KPTSS.

Belongs to the chorismate synthase family. As to quaternary structure, homotetramer. Requires FMNH2 as cofactor.

It catalyses the reaction 5-O-(1-carboxyvinyl)-3-phosphoshikimate = chorismate + phosphate. Its pathway is metabolic intermediate biosynthesis; chorismate biosynthesis; chorismate from D-erythrose 4-phosphate and phosphoenolpyruvate: step 7/7. Functionally, catalyzes the anti-1,4-elimination of the C-3 phosphate and the C-6 proR hydrogen from 5-enolpyruvylshikimate-3-phosphate (EPSP) to yield chorismate, which is the branch point compound that serves as the starting substrate for the three terminal pathways of aromatic amino acid biosynthesis. This reaction introduces a second double bond into the aromatic ring system. The protein is Chorismate synthase of Colwellia psychrerythraea (strain 34H / ATCC BAA-681) (Vibrio psychroerythus).